Reading from the N-terminus, the 101-residue chain is NADH-quinone oxidoreductase subunit K (101 aa).

The next 3 membrane-spanning stretches (helical) occupy residues 4 to 24 (LSHY…GIFL), 30 to 50 (IILL…FVAF), and 61 to 81 (IFVF…LAIL).

It belongs to the complex I subunit 4L family. In terms of assembly, NDH-1 is composed of 14 different subunits. Subunits NuoA, H, J, K, L, M, N constitute the membrane sector of the complex.

The protein localises to the cell inner membrane. It carries out the reaction a quinone + NADH + 5 H(+)(in) = a quinol + NAD(+) + 4 H(+)(out). In terms of biological role, NDH-1 shuttles electrons from NADH, via FMN and iron-sulfur (Fe-S) centers, to quinones in the respiratory chain. The immediate electron acceptor for the enzyme in this species is believed to be ubiquinone. Couples the redox reaction to proton translocation (for every two electrons transferred, four hydrogen ions are translocated across the cytoplasmic membrane), and thus conserves the redox energy in a proton gradient. The polypeptide is NADH-quinone oxidoreductase subunit K (Nitrosomonas europaea (strain ATCC 19718 / CIP 103999 / KCTC 2705 / NBRC 14298)).